Here is a 373-residue protein sequence, read N- to C-terminus: Chorismate synthase (373 aa).

Residues Arg-48 and Arg-54 each contribute to the NADP(+) site. FMN is bound by residues 125 to 127 (RSS), 248 to 249 (NA), Gly-288, 303 to 307 (KPTSS), and Arg-329.

The protein belongs to the chorismate synthase family. In terms of assembly, homotetramer. Requires FMNH2 as cofactor.

It carries out the reaction 5-O-(1-carboxyvinyl)-3-phosphoshikimate = chorismate + phosphate. It participates in metabolic intermediate biosynthesis; chorismate biosynthesis; chorismate from D-erythrose 4-phosphate and phosphoenolpyruvate: step 7/7. In terms of biological role, catalyzes the anti-1,4-elimination of the C-3 phosphate and the C-6 proR hydrogen from 5-enolpyruvylshikimate-3-phosphate (EPSP) to yield chorismate, which is the branch point compound that serves as the starting substrate for the three terminal pathways of aromatic amino acid biosynthesis. This reaction introduces a second double bond into the aromatic ring system. In Colwellia psychrerythraea (strain 34H / ATCC BAA-681) (Vibrio psychroerythus), this protein is Chorismate synthase.